The primary structure comprises 346 residues: 4-hydroxy-2-oxovalerate aldolase 2 (346 aa).

Positions 8–258 (VTLVDTTLRD…HTGVELFPLI (251 aa)) constitute a Pyruvate carboxyltransferase domain. Residues 16-17 (RD), serine 170, and histidine 197 contribute to the substrate site. Mn(2+) is bound at residue aspartate 17. Residues histidine 197 and histidine 199 each coordinate Mn(2+). Tyrosine 288 is a binding site for substrate.

This sequence belongs to the 4-hydroxy-2-oxovalerate aldolase family.

It catalyses the reaction (S)-4-hydroxy-2-oxopentanoate = acetaldehyde + pyruvate. In Nocardia farcinica (strain IFM 10152), this protein is 4-hydroxy-2-oxovalerate aldolase 2.